The sequence spans 98 residues: Putative defensin-like protein 239 (98 aa).

An N-terminal signal peptide occupies residues 1-23 (MRYTTSFIGLCFLIFLLKNLVNG). 4 disulfide bridges follow: C29–C89, C39–C69, C47–C86, and C67–C88.

The protein belongs to the DEFL family.

The protein localises to the secreted. This Arabidopsis thaliana (Mouse-ear cress) protein is Putative defensin-like protein 239 (SCRL17).